We begin with the raw amino-acid sequence, 81 residues long: Omega-conotoxin-like TxMKLT1-0223 (81 aa).

An N-terminal signal peptide occupies residues 1-22; sequence MKLTCMMIVAVLFLTAWTFVTA. A propeptide spanning residues 23–52 is cleaved from the precursor; that stretch reads VPHSSNALENLYLKARHEMENPEASKLNTR. 3 disulfide bridges follow: Cys55–Cys72, Cys62–Cys76, and Cys71–Cys80.

This sequence belongs to the conotoxin O1 superfamily. As to expression, expressed by the venom duct.

Its subcellular location is the secreted. In terms of biological role, omega-conotoxins act at presynaptic membranes, they bind and block voltage-gated calcium channels (Cav). This is Omega-conotoxin-like TxMKLT1-0223 from Conus textile (Cloth-of-gold cone).